The sequence spans 568 residues: Protein yellow (568 aa).

Positions 1–28 (MHAQDKGGVLPGLSLLLIAVAMVCPSQA) are cleaved as a signal peptide. N-linked (GlcNAc...) asparagine glycans are attached at residues Asn151 and Asn222.

Belongs to the major royal jelly protein family.

It localises to the secreted. Its function is as follows. Controls the pigmentation pattern of the adult cuticle and larval mouth parts. The polypeptide is Protein yellow (y) (Drosophila guanche (Fruit fly)).